The chain runs to 226 residues: MAKISKRFKEALSKVEKNKVYPLNKALDLAKQTATTKFDSTVEVAFNLNIDPRKADQQIRGAVVLPAGTGKTQRVLVLTNTKTKEAEQAKADIVGGEELINRIKNENWFDFDIIVATPEMMAKLGAIGKILGPKGLMPNPKTGTVTMDVAKAVDDIKKGKVEYRADKEGNIHLIIGKVSFEAEKLEENFKAVIDEIRRVKPQTVKGDYIKNITLSTTMGPGIKVEF.

The protein belongs to the universal ribosomal protein uL1 family. In terms of assembly, part of the 50S ribosomal subunit.

Functionally, binds directly to 23S rRNA. The L1 stalk is quite mobile in the ribosome, and is involved in E site tRNA release. Protein L1 is also a translational repressor protein, it controls the translation of the L11 operon by binding to its mRNA. The chain is Large ribosomal subunit protein uL1 from Mycoplasma capricolum subsp. capricolum (strain California kid / ATCC 27343 / NCTC 10154).